Consider the following 444-residue polypeptide: KARVGFKAGVKDYRLTYYTPEYENKDTDILAAFRVTPQPGVPAEEAAAAVAAESSTGTWTTVWTDGLTSLDRYKGRCYHIEAVVGEENQYIAYVAYPLDLFEEGSVTNMFTSIVGNVFGFXXXRALRLEDLRIPPAYSKTFQGPPHGIQVERDKLNKYGRPLLGCTIKPKLGLSAKNYGRAVYECLRGGLDFTKDDENVNSQPFMRWRDRFLFCAEALYKAQAETGEIKGHYLNATAGTCEEMIKRAVFARELGVPIVMHDYLTGGFTANTTLAHYCRDNGLLLHIHRAMHAVIDRQKNHGMHFRVLAKALRMSGGDHIHSGTVVGKLEGEREMTLGFVDLLRDDYIEKDRSRGIFFTQDWVSMPGVLPVASGGIHVWHMPALTEIFGDDSVLQFGGGTLGHPWGNAPGAVANRVALEACVQARNEGRDLASEGNEIIREACSW.

Lys7 bears the N6,N6,N6-trimethyllysine mark. Residues Asn116 and Thr166 each coordinate substrate. Lys168 functions as the Proton acceptor in the catalytic mechanism. Lys170 is a substrate binding site. Mg(2+)-binding residues include Lys194, Asp196, and Glu197. Lys194 is modified (N6-carboxylysine). His287 serves as the catalytic Proton acceptor. Substrate contacts are provided by Arg288, His320, and Ser372.

Belongs to the RuBisCO large chain family. Type I subfamily. As to quaternary structure, heterohexadecamer of 8 large chains and 8 small chains; disulfide-linked. The disulfide link is formed within the large subunit homodimers. It depends on Mg(2+) as a cofactor. In terms of processing, the disulfide bond which can form in the large chain dimeric partners within the hexadecamer appears to be associated with oxidative stress and protein turnover.

The protein resides in the plastid. The protein localises to the chloroplast. The enzyme catalyses 2 (2R)-3-phosphoglycerate + 2 H(+) = D-ribulose 1,5-bisphosphate + CO2 + H2O. It carries out the reaction D-ribulose 1,5-bisphosphate + O2 = 2-phosphoglycolate + (2R)-3-phosphoglycerate + 2 H(+). In terms of biological role, ruBisCO catalyzes two reactions: the carboxylation of D-ribulose 1,5-bisphosphate, the primary event in carbon dioxide fixation, as well as the oxidative fragmentation of the pentose substrate in the photorespiration process. Both reactions occur simultaneously and in competition at the same active site. In Watsonia angusta, this protein is Ribulose bisphosphate carboxylase large chain.